The chain runs to 63 residues: Large ribosomal subunit protein uL29 (63 aa).

The protein belongs to the universal ribosomal protein uL29 family.

The polypeptide is Large ribosomal subunit protein uL29 (Pseudoalteromonas atlantica (strain T6c / ATCC BAA-1087)).